The sequence spans 195 residues: Imidazoleglycerol-phosphate dehydratase (195 aa).

It belongs to the imidazoleglycerol-phosphate dehydratase family.

It is found in the cytoplasm. The catalysed reaction is D-erythro-1-(imidazol-4-yl)glycerol 3-phosphate = 3-(imidazol-4-yl)-2-oxopropyl phosphate + H2O. Its pathway is amino-acid biosynthesis; L-histidine biosynthesis; L-histidine from 5-phospho-alpha-D-ribose 1-diphosphate: step 6/9. The chain is Imidazoleglycerol-phosphate dehydratase from Paraburkholderia phytofirmans (strain DSM 17436 / LMG 22146 / PsJN) (Burkholderia phytofirmans).